Reading from the N-terminus, the 523-residue chain is ATP synthase subunit beta, mitochondrial (523 aa).

Residues 1–19 (MFSRVAKTSFSAVRAAKSQ) constitute a mitochondrion transit peptide. 201–208 (GGAGVGKT) is a binding site for ATP.

It belongs to the ATPase alpha/beta chains family. F-type ATPases have 2 components, CF(1) - the catalytic core - and CF(0) - the membrane proton channel. CF(1) has five subunits: alpha(3), beta(3), gamma(1), delta(1), epsilon(1). CF(0) has three main subunits: a, b and c.

The protein resides in the mitochondrion. It is found in the mitochondrion inner membrane. The catalysed reaction is ATP + H2O + 4 H(+)(in) = ADP + phosphate + 5 H(+)(out). Mitochondrial membrane ATP synthase (F(1)F(0) ATP synthase or Complex V) produces ATP from ADP in the presence of a proton gradient across the membrane which is generated by electron transport complexes of the respiratory chain. F-type ATPases consist of two structural domains, F(1) - containing the extramembraneous catalytic core, and F(0) - containing the membrane proton channel, linked together by a central stalk and a peripheral stalk. During catalysis, ATP synthesis in the catalytic domain of F(1) is coupled via a rotary mechanism of the central stalk subunits to proton translocation. Subunits alpha and beta form the catalytic core in F(1). Rotation of the central stalk against the surrounding alpha(3)beta(3) subunits leads to hydrolysis of ATP in three separate catalytic sites on the beta subunits. The chain is ATP synthase subunit beta, mitochondrial from Hemicentrotus pulcherrimus (Sea urchin).